The sequence spans 206 residues: Small ribosomal subunit protein uS4 (206 aa).

An S4 RNA-binding domain is found at 96–156; it reads TRLDNVVYRM…EKSQKQARIK (61 aa).

This sequence belongs to the universal ribosomal protein uS4 family. In terms of assembly, part of the 30S ribosomal subunit. Contacts protein S5. The interaction surface between S4 and S5 is involved in control of translational fidelity.

In terms of biological role, one of the primary rRNA binding proteins, it binds directly to 16S rRNA where it nucleates assembly of the body of the 30S subunit. With S5 and S12 plays an important role in translational accuracy. This chain is Small ribosomal subunit protein uS4, found in Shewanella loihica (strain ATCC BAA-1088 / PV-4).